Consider the following 490-residue polypeptide: Protoporphyrinogen oxidase (490 aa).

FAD is bound by residues 7-12 (GGGIAG), 32-33 (EK), Trp-40, 61-64 (GPRT), and 466-468 (VSI).

Belongs to the protoporphyrinogen/coproporphyrinogen oxidase family. Protoporphyrinogen oxidase subfamily. FAD serves as cofactor.

The protein resides in the mitochondrion. It catalyses the reaction protoporphyrinogen IX + 3 O2 = protoporphyrin IX + 3 H2O2. It functions in the pathway porphyrin-containing compound metabolism; protoporphyrin-IX biosynthesis; protoporphyrin-IX from protoporphyrinogen-IX: step 1/1. Catalyzes the 6-electron oxidation of protoporphyrinogen-IX to form protoporphyrin-IX. In Schizosaccharomyces pombe (strain 972 / ATCC 24843) (Fission yeast), this protein is Protoporphyrinogen oxidase (hem14).